The chain runs to 217 residues: Cytidylate kinase (217 aa).

10 to 18 is a binding site for ATP; that stretch reads GPAGAGKST.

This sequence belongs to the cytidylate kinase family. Type 1 subfamily.

The protein localises to the cytoplasm. It catalyses the reaction CMP + ATP = CDP + ADP. The catalysed reaction is dCMP + ATP = dCDP + ADP. This Clostridium botulinum (strain Langeland / NCTC 10281 / Type F) protein is Cytidylate kinase.